The sequence spans 469 residues: Tetratricopeptide repeat protein 38 (469 aa).

N-acetylalanine is present on Ala2. Ser5 is subject to Phosphoserine. TPR repeat units lie at residues 108–141, 180–213, and 252–285; these read REQL…HPTD, SYVK…NPTD, and CHNY…SLQA.

This sequence belongs to the TTC38 family.

This Pongo abelii (Sumatran orangutan) protein is Tetratricopeptide repeat protein 38 (TTC38).